Consider the following 184-residue polypeptide: Large ribosomal subunit protein uL6 (184 aa).

This sequence belongs to the universal ribosomal protein uL6 family. Part of the 50S ribosomal subunit.

Its function is as follows. This protein binds to the 23S rRNA, and is important in its secondary structure. It is located near the subunit interface in the base of the L7/L12 stalk, and near the tRNA binding site of the peptidyltransferase center. This Pyrococcus abyssi (strain GE5 / Orsay) protein is Large ribosomal subunit protein uL6.